A 673-amino-acid chain; its full sequence is UvrABC system protein B (673 aa).

A Helicase ATP-binding domain is found at 26–183 (EGLEDGLAHQ…RRLAELQYTR (158 aa)). 39 to 46 (GVTGSGKT) serves as a coordination point for ATP. Positions 92-115 (YYDYYQPEAYVPSSDTFIEKDASV) match the Beta-hairpin motif. The 167-residue stretch at 431 to 597 (QVDDLLSEIR…GLNKKVVDIL (167 aa)) folds into the Helicase C-terminal domain. In terms of domain architecture, UVR spans 633 to 668 (QQKIHELEGQMMQHAQNLEFEEAAQIRDQLHQLREL).

This sequence belongs to the UvrB family. In terms of assembly, forms a heterotetramer with UvrA during the search for lesions. Interacts with UvrC in an incision complex.

It localises to the cytoplasm. Functionally, the UvrABC repair system catalyzes the recognition and processing of DNA lesions. A damage recognition complex composed of 2 UvrA and 2 UvrB subunits scans DNA for abnormalities. Upon binding of the UvrA(2)B(2) complex to a putative damaged site, the DNA wraps around one UvrB monomer. DNA wrap is dependent on ATP binding by UvrB and probably causes local melting of the DNA helix, facilitating insertion of UvrB beta-hairpin between the DNA strands. Then UvrB probes one DNA strand for the presence of a lesion. If a lesion is found the UvrA subunits dissociate and the UvrB-DNA preincision complex is formed. This complex is subsequently bound by UvrC and the second UvrB is released. If no lesion is found, the DNA wraps around the other UvrB subunit that will check the other stand for damage. The chain is UvrABC system protein B from Klebsiella pneumoniae (strain 342).